The chain runs to 317 residues: Zinc finger protein 771 (317 aa).

Residue lysine 33 forms a Glycyl lysine isopeptide (Lys-Gly) (interchain with G-Cter in SUMO2) linkage. 8 C2H2-type zinc fingers span residues 63–85 (HACP…ARTH), 91–113 (FACT…GRTH), 119–141 (YQCP…RRRH), 147–169 (YACA…LRVH), 175–197 (YACP…RRTH), 203–225 (YACA…RRVH), 231–253 (HRCA…ARTH), and 259–281 (YPCT…RRAH).

Belongs to the krueppel C2H2-type zinc-finger protein family.

The protein resides in the nucleus. Its function is as follows. May be involved in transcriptional regulation. The polypeptide is Zinc finger protein 771 (Znf771) (Mus musculus (Mouse)).